The primary structure comprises 162 residues: Peroxiredoxin-2C (162 aa).

Residues 4 to 162 form the Thioredoxin domain; the sequence is VAVGDTLPDG…SGAEEILKAL (159 aa). Cys51 serves as the catalytic Cysteine sulfenic acid (-SOH) intermediate.

It belongs to the peroxiredoxin family. Prx5 subfamily. As to quaternary structure, monomer.

The protein resides in the cytoplasm. The catalysed reaction is [glutaredoxin]-dithiol + a hydroperoxide = [glutaredoxin]-disulfide + an alcohol + H2O. In terms of biological role, reduces hydrogen peroxide and alkyl hydroperoxides with reducing equivalents provided through the thioredoxin or glutaredoxin system. May be involved in intracellular redox signaling. Functionally, thiol-specific peroxidase that catalyzes the reduction of hydrogen peroxide and organic hydroperoxides to water and alcohols, respectively. Plays a role in cell protection against oxidative stress by detoxifying peroxides. The protein is Peroxiredoxin-2C (PRXIIC) of Oryza sativa subsp. japonica (Rice).